The primary structure comprises 128 residues: UPF0102 protein KPN78578_35270 (128 aa).

The disordered stretch occupies residues 1–20 (MAQVPAGKNRSGQLSKQTGD).

Belongs to the UPF0102 family.

The protein is UPF0102 protein KPN78578_35270 of Klebsiella pneumoniae subsp. pneumoniae (strain ATCC 700721 / MGH 78578).